We begin with the raw amino-acid sequence, 360 residues long: Peptide chain release factor 1 (360 aa).

Position 235 is an N5-methylglutamine (Q235). The tract at residues 281-310 is disordered; that stretch reads AERQRQDAAQAESRRLQVGSGDRSQRIRTY.

This sequence belongs to the prokaryotic/mitochondrial release factor family. Post-translationally, methylated by PrmC. Methylation increases the termination efficiency of RF1.

The protein resides in the cytoplasm. In terms of biological role, peptide chain release factor 1 directs the termination of translation in response to the peptide chain termination codons UAG and UAA. The protein is Peptide chain release factor 1 of Stenotrophomonas maltophilia (strain K279a).